A 259-amino-acid chain; its full sequence is Protoheme IX farnesyltransferase (259 aa).

8 helical membrane passes run 15–35, 61–81, 83–103, 109–129, 137–157, 182–202, 208–228, and 236–256; these read LICL…NGVL, ATVA…TFLP, LTTA…TLWF, WGVV…ASAV, PLIL…ALAL, VCIF…WFTG, FAIE…LYLV, and AFQA…IDIC.

The protein belongs to the UbiA prenyltransferase family. Protoheme IX farnesyltransferase subfamily.

It localises to the cell inner membrane. It catalyses the reaction heme b + (2E,6E)-farnesyl diphosphate + H2O = Fe(II)-heme o + diphosphate. The protein operates within porphyrin-containing compound metabolism; heme O biosynthesis; heme O from protoheme: step 1/1. Functionally, converts heme B (protoheme IX) to heme O by substitution of the vinyl group on carbon 2 of heme B porphyrin ring with a hydroxyethyl farnesyl side group. This is Protoheme IX farnesyltransferase from Geotalea uraniireducens (strain Rf4) (Geobacter uraniireducens).